A 492-amino-acid polypeptide reads, in one-letter code: NADH-quinone oxidoreductase subunit N (492 aa).

14 consecutive transmembrane segments (helical) span residues Pro5 to Ile25, Thr37 to Leu57, Val72 to Ile92, Leu104 to Ile124, Phe129 to Leu149, Tyr164 to Ala184, Val205 to Val225, Pro239 to Leu259, Met276 to Gln295, Leu302 to Val322, Met337 to Leu357, Phe380 to Phe400, Gly414 to Leu434, and Val466 to Ile486.

This sequence belongs to the complex I subunit 2 family. NDH-1 is composed of 14 different subunits. Subunits NuoA, H, J, K, L, M, N constitute the membrane sector of the complex.

It is found in the cell inner membrane. It catalyses the reaction a quinone + NADH + 5 H(+)(in) = a quinol + NAD(+) + 4 H(+)(out). In terms of biological role, NDH-1 shuttles electrons from NADH, via FMN and iron-sulfur (Fe-S) centers, to quinones in the respiratory chain. The immediate electron acceptor for the enzyme in this species is believed to be ubiquinone. Couples the redox reaction to proton translocation (for every two electrons transferred, four hydrogen ions are translocated across the cytoplasmic membrane), and thus conserves the redox energy in a proton gradient. This Paraburkholderia phymatum (strain DSM 17167 / CIP 108236 / LMG 21445 / STM815) (Burkholderia phymatum) protein is NADH-quinone oxidoreductase subunit N.